Reading from the N-terminus, the 223-residue chain is Adenylate kinase (223 aa).

Residue 17 to 22 (GAGKGT) participates in ATP binding. The segment at 37–66 (STGDMLRSQVAKGTPLGVEAKKIMDQGGLV) is NMP. Residues Thr38, Arg43, 64-66 (GLV), 93-96 (GFPR), and Gln100 each bind AMP. The interval 134–171 (GRLVHPSSGRSYHKLFNPPKVEMTDDVTGEPLVQRSDD) is LID. ATP-binding positions include Arg135 and 144–145 (SY). Residues Arg168 and Arg179 each coordinate AMP. Gln207 is a binding site for ATP.

Belongs to the adenylate kinase family. AK2 subfamily. Monomer.

The protein resides in the cytoplasm. It localises to the cytosol. The protein localises to the mitochondrion intermembrane space. The catalysed reaction is AMP + ATP = 2 ADP. Functionally, catalyzes the reversible transfer of the terminal phosphate group between ATP and AMP. Plays an important role in cellular energy homeostasis and in adenine nucleotide metabolism. Adenylate kinase activity is critical for regulation of the phosphate utilization and the AMP de novo biosynthesis pathways. The chain is Adenylate kinase from Vanderwaltozyma polyspora (strain ATCC 22028 / DSM 70294 / BCRC 21397 / CBS 2163 / NBRC 10782 / NRRL Y-8283 / UCD 57-17) (Kluyveromyces polysporus).